Here is a 190-residue protein sequence, read N- to C-terminus: Probable RNA-binding protein 18 (190 aa).

Residues 25-106 form the RRM domain; sequence HRLWIGNLDP…KKLVVRWAHA (82 aa). A disordered region spans residues 166-190; that stretch reads VYSYFKPPDKKRTTPYSRTAWKSRR.

The protein is Probable RNA-binding protein 18 (Rbm18) of Mus musculus (Mouse).